Reading from the N-terminus, the 201-residue chain is Dephospho-CoA kinase (201 aa).

Residues 4–201 (SVGLTGNIAS…KYLREAKIKQ (198 aa)) form the DPCK domain. 12–17 (ASGKST) serves as a coordination point for ATP.

Belongs to the CoaE family.

Its subcellular location is the cytoplasm. It catalyses the reaction 3'-dephospho-CoA + ATP = ADP + CoA + H(+). The protein operates within cofactor biosynthesis; coenzyme A biosynthesis; CoA from (R)-pantothenate: step 5/5. In terms of biological role, catalyzes the phosphorylation of the 3'-hydroxyl group of dephosphocoenzyme A to form coenzyme A. In Legionella pneumophila (strain Paris), this protein is Dephospho-CoA kinase.